Consider the following 410-residue polypeptide: Translation initiation factor 2 subunit gamma (410 aa).

Residues 9–202 (QAEVNIGMVG…AIEEFIPTPK (194 aa)) enclose the tr-type G domain. Residues 18–25 (GHVDHGKT) form a G1 region. Mg(2+) contacts are provided by Asp-21, Thr-25, Gly-46, and Thr-48. Position 21–26 (21–26 (DHGKTT)) interacts with GTP. Positions 46-50 (GITIK) are G2. Residues Cys-61, Cys-64, Cys-73, and Cys-76 each coordinate Zn(2+). Residues 90 to 93 (DAPG) form a G3 region. GTP-binding positions include 145–148 (NKIE) and 180–182 (SAL). The segment at 145 to 148 (NKIE) is G4. The tract at residues 180-182 (SAL) is G5.

Belongs to the TRAFAC class translation factor GTPase superfamily. Classic translation factor GTPase family. EIF2G subfamily. Heterotrimer composed of an alpha, a beta and a gamma chain. Requires Mg(2+) as cofactor.

It catalyses the reaction GTP + H2O = GDP + phosphate + H(+). Its function is as follows. eIF-2 functions in the early steps of protein synthesis by forming a ternary complex with GTP and initiator tRNA. This is Translation initiation factor 2 subunit gamma from Thermococcus kodakarensis (strain ATCC BAA-918 / JCM 12380 / KOD1) (Pyrococcus kodakaraensis (strain KOD1)).